We begin with the raw amino-acid sequence, 212 residues long: Peptide methionine sulfoxide reductase MsrA (212 aa).

Cys-52 is an active-site residue.

Belongs to the MsrA Met sulfoxide reductase family.

The catalysed reaction is L-methionyl-[protein] + [thioredoxin]-disulfide + H2O = L-methionyl-(S)-S-oxide-[protein] + [thioredoxin]-dithiol. The enzyme catalyses [thioredoxin]-disulfide + L-methionine + H2O = L-methionine (S)-S-oxide + [thioredoxin]-dithiol. In terms of biological role, has an important function as a repair enzyme for proteins that have been inactivated by oxidation. Catalyzes the reversible oxidation-reduction of methionine sulfoxide in proteins to methionine. The sequence is that of Peptide methionine sulfoxide reductase MsrA from Shigella boydii serotype 4 (strain Sb227).